The sequence spans 600 residues: Elongation factor 4 (600 aa).

Positions 4-186 constitute a tr-type G domain; sequence DTIRNFSIIA…EIVKKIPPPE (183 aa). GTP contacts are provided by residues 16–21 and 133–136; these read DHGKST and NKID.

The protein belongs to the TRAFAC class translation factor GTPase superfamily. Classic translation factor GTPase family. LepA subfamily.

The protein localises to the cell inner membrane. It catalyses the reaction GTP + H2O = GDP + phosphate + H(+). Its function is as follows. Required for accurate and efficient protein synthesis under certain stress conditions. May act as a fidelity factor of the translation reaction, by catalyzing a one-codon backward translocation of tRNAs on improperly translocated ribosomes. Back-translocation proceeds from a post-translocation (POST) complex to a pre-translocation (PRE) complex, thus giving elongation factor G a second chance to translocate the tRNAs correctly. Binds to ribosomes in a GTP-dependent manner. In Geobacter sulfurreducens (strain ATCC 51573 / DSM 12127 / PCA), this protein is Elongation factor 4.